A 177-amino-acid chain; its full sequence is Peptide methionine sulfoxide reductase MsrA 2 (177 aa).

Cys12 is a catalytic residue.

Belongs to the MsrA Met sulfoxide reductase family.

It catalyses the reaction L-methionyl-[protein] + [thioredoxin]-disulfide + H2O = L-methionyl-(S)-S-oxide-[protein] + [thioredoxin]-dithiol. The enzyme catalyses [thioredoxin]-disulfide + L-methionine + H2O = L-methionine (S)-S-oxide + [thioredoxin]-dithiol. Its function is as follows. Has an important function as a repair enzyme for proteins that have been inactivated by oxidation. Catalyzes the reversible oxidation-reduction of methionine sulfoxide in proteins to methionine. The chain is Peptide methionine sulfoxide reductase MsrA 2 (msrA2) from Staphylococcus aureus (strain NCTC 8325 / PS 47).